Consider the following 235-residue polypeptide: Probable queuosine precursor transporter (235 aa).

The next 6 membrane-spanning stretches (helical) occupy residues 17-37, 56-76, 87-107, 127-147, 155-175, and 201-221; these read IIWLSFFHIFIIAASNYFVQI, FHSTWGTLTFPFIFLATDLTV, IIFVVMFPALIVSYVISVLFS, IAIASFAAYVVGQLLDVIVFN, WWVAPTSSMTFGSMADTFVFF, and FKLFIGIILFVPAYGVVLNVI.

Belongs to the vitamin uptake transporter (VUT/ECF) (TC 2.A.88) family. Q precursor transporter subfamily.

The protein localises to the cell inner membrane. Involved in the import of queuosine (Q) precursors, required for Q precursor salvage. This chain is Probable queuosine precursor transporter, found in Haemophilus influenzae (strain ATCC 51907 / DSM 11121 / KW20 / Rd).